We begin with the raw amino-acid sequence, 28 residues long: Palustrin-1a (28 aa).

A disulfide bond links cysteine 22 and cysteine 28.

Expressed by the skin glands.

It is found in the secreted. In terms of biological role, antimicrobial activity against Gram-negative bacterium E.coli. The polypeptide is Palustrin-1a (Lithobates palustris (Pickerel frog)).